The following is a 282-amino-acid chain: N-methyltransferase gliN (282 aa).

Belongs to the methyltransferase superfamily. LaeA methyltransferase family.

It participates in mycotoxin biosynthesis. Functionally, N-methyltransferase; part of the gene cluster that mediates the biosynthesis of gliotoxin, a member of the epipolythiodioxopiperazine (ETP) class of toxins characterized by a disulfide bridged cyclic dipeptide. The first step in gliotoxin biosynthesis is the condensation of serine and phenylalanine to form the cyclo-L-phenylalanyl-L-serine diketopiperazine (DKP) by the NRPS gliP. GliP is also able to produce the DKP cyclo-L-tryptophanyl-L-serine, suggesting that the substrate specificity of the first adenylation (A) domain in gliP is sufficiently relaxed to accommodate both L-Phe and L-Trp. The cytochrome P450 monooxygenase gliC has been shown to catalyze the subsequent hydroxylation of the alpha-carbon of L-Phe in cyclo-L-phenylalanyl-L-serine whereas the second cytochrome P450 enzyme, gliF, is presumably involved in the modification of the DKP side chain. The glutathione S-transferase (GST) gliG then forms a bis-glutathionylated biosynthetic intermediate which is responsible for the sulfurization of gliotoxin. This bis-glutathionylated intermediate is subsequently processed by the gamma-glutamyl cyclotransferase gliK to remove both gamma-glutamyl moieties. Subsequent processing via gliI yields a biosynthetic intermediate, which is N-methylated via the N-methyltransferase gliN, before the gliotoxin oxidoreductase gliT-mediated disulfide bridge closure. GliN-mediated amide methylation confers stability to ETP, damping the spontaneous formation of tri- and tetrasulfides. Intracellular dithiol gliotoxin oxidized by gliT is subsequently effluxed by gliA. Gliotoxin contributes to pathogenesis during invasive aspergillosis. In macrophages and neutrophils, gliotoxin showed inhibition of various different cell functions including cytokine production, antigen presentation, phagocytosis, and production of reactive oxygen species. In Aspergillus fumigatus (strain ATCC MYA-4609 / CBS 101355 / FGSC A1100 / Af293) (Neosartorya fumigata), this protein is N-methyltransferase gliN.